Consider the following 422-residue polypeptide: F-box protein At3g12350 (422 aa).

The region spanning 5–52 (ALPFCEIPEDLQLRILSLLTPAEISSFACTSKRFASLCQEDGKIWHVM) is the F-box domain. 2 stretches are compositionally biased toward basic and acidic residues: residues 197–207 (NNRREDQRSSG) and 242–252 (KEKERQASRTK). 2 disordered regions span residues 197–216 (NNRR…LISS) and 226–252 (LANK…SRTK).

This is F-box protein At3g12350 from Arabidopsis thaliana (Mouse-ear cress).